The sequence spans 129 residues: MARPKKVVKKKEKKSVPVGIAHIQASFNNTIITFTDTRGNAVSWASSGQSGFKGSRKSTPFAAQVAAETAARKAQDNGMRTVGIYVQGPGSGREAAMRAISAAGMKVAFIRDVTPIPHNGCRPPKRRRV.

The protein belongs to the universal ribosomal protein uS11 family. In terms of assembly, part of the 30S ribosomal subunit. Interacts with proteins S7 and S18. Binds to IF-3.

Functionally, located on the platform of the 30S subunit, it bridges several disparate RNA helices of the 16S rRNA. Forms part of the Shine-Dalgarno cleft in the 70S ribosome. This chain is Small ribosomal subunit protein uS11, found in Desulfovibrio desulfuricans (strain ATCC 27774 / DSM 6949 / MB).